Consider the following 419-residue polypeptide: Acyl-[acyl-carrier-protein] desaturase 6, chloroplastic (419 aa).

Residues 1-54 (MAATATMAMPLANRLRCKPNTNSSSPSRTLFGRRVTMISSSRWGSAVSGSAIMS) constitute a chloroplast transit peptide. The Fe cation site is built by E151, E189, H192, E242, E277, and H280.

This sequence belongs to the fatty acid desaturase type 2 family. Homodimer. Fe(2+) serves as cofactor.

It localises to the plastid. Its subcellular location is the chloroplast. The protein operates within lipid metabolism; fatty acid metabolism. In terms of biological role, introduces a cis double bond in the acyl chain of an acyl-[acyl-carrier protein]. This is Acyl-[acyl-carrier-protein] desaturase 6, chloroplastic from Oryza sativa subsp. japonica (Rice).